A 401-amino-acid polypeptide reads, in one-letter code: Nodal homolog 3-C (401 aa).

Positions 1–18 are cleaved as a signal peptide; the sequence is MAFLSLFLCLVFSSPLMA. Positions 19–274 are excised as a propeptide; that stretch reads MPPALQGRKA…KVNGFRRLRR (256 aa). Residues N168, N337, and N344 are each glycosylated (N-linked (GlcNAc...) asparagine). 2 disulfides stabilise this stretch: C299-C365 and C328-C396.

This sequence belongs to the TGF-beta family. In terms of assembly, monomer. The propeptide region interacts with bmp4 in a non-covalent manner. As to expression, expressed in the dorsal marginal region of late blastula, becoming restricted to the Spemann organizer at the early gastrula stage.

The protein localises to the secreted. In terms of biological role, exhibits mesoderm-dorsalizing activity and neural-inducing activity, but lacks mesoderm-inducing activity. Regulates the expression of specific mesodermal and neural genes. Induces convergent extension movements at the embryonic midline by activating the fgf signaling pathway to induce t/bra expression in the organizer region. Acts with wnt11 to induce Spemann organizer cells and induce axis formation. The unprocessed protein antagonizes bmp-signaling. The polypeptide is Nodal homolog 3-C (Xenopus tropicalis (Western clawed frog)).